Reading from the N-terminus, the 481-residue chain is OTU domain-containing protein 1 (481 aa).

Disordered stretches follow at residues 18–60 (PTAA…AAAE) and 202–282 (LAAA…IVSR). Residues 38–58 (PPGAAGAAPEPETGECQPAAA) show a composition bias toward low complexity. Over residues 225–257 (GEEHLAERGPRGWERGGDRCDAPGGDAARRPDP) the composition is skewed to basic and acidic residues. The span at 261–281 (APPAGSIEAAPSSAAEPVIVS) shows a compositional bias: low complexity. One can recognise an OTU domain in the interval 309–438 (KYRFHIIPDG…NGHYDAVFDH (130 aa)). The cys-loop stretch occupies residues 314 to 320 (IIPDGNC). Aspartate 317 is a catalytic residue. Cysteine 320 serves as the catalytic Nucleophile. The tract at residues 369–379 (AAQDGAWAGYP) is his-loop. The variable-loop stretch occupies residues 426–431 (WLSNGH). Histidine 431 is an active-site residue. The UIM domain maps to 457-476 (KRDEELAKSMAISLSKMYIE).

The enzyme catalyses Thiol-dependent hydrolysis of ester, thioester, amide, peptide and isopeptide bonds formed by the C-terminal Gly of ubiquitin (a 76-residue protein attached to proteins as an intracellular targeting signal).. Functionally, deubiquitinating enzyme that specifically hydrolyzes 'Lys-63'-linked polyubiquitin to monoubiquitin. Required for the stability and translation of a subset mRNAs with a high abundance of rare codons by mediating deubiquitination of 40S ribosomal protein RPS10/eS10, thereby antagonizing ZNF598-mediated 40S ubiquitination. The abundance of rare codons in mRNAs can limit the translation rate and can lead to ribosome collisions that trigger activation of ribosome quality control (RQC) pathway by ZNF598. OTUD1-mediated deubiquitination prevents activation of the RQC and subsequent dissociation of ribosomes and stimulates formation of polysomes and translation. This is OTU domain-containing protein 1 from Homo sapiens (Human).